Consider the following 2253-residue polypeptide: Polycystin family receptor for egg jelly (2253 aa).

The N-terminal stretch at 1–19 (MRPGPALLLLGVGLSLSVG) is a signal peptide. The Extracellular segment spans residues 20-1184 (RLPLPPVPRG…NIIKSLHQNP (1165 aa)). Positions 154-169 (RPASPAARVSPRSAAP) are enriched in low complexity. A disordered region spans residues 154-177 (RPASPAARVSPRSAAPGPRPQQGF). 14 N-linked (GlcNAc...) asparagine glycosylation sites follow: N197, N242, N295, N306, N345, N349, N481, N674, N849, N890, N923, N939, N958, and N965. Residues 215–913 (CVIQRVRINT…STMFCDFTND (699 aa)) enclose the REJ domain. Residues 1185–1205 (VTLFTVLFIILLYVGLAFWAL) traverse the membrane as a helical segment. At 1206–1389 (YRDEMDQHLR…VAKTFNRLQR (184 aa)) the chain is on the cytoplasmic side. The region spanning 1230–1347 (LCYLVTIFTG…TLDRTFHVTH (118 aa)) is the PLAT domain. Residues 1390–1410 (LSCCLAMLLSSLLCNIMFFNL) form a helical membrane-spanning segment. Topologically, residues 1411 to 1427 (NRQEQTESRERKYMRSM) are extracellular. A helical transmembrane segment spans residues 1428-1448 (MIGIESVLITIPVQLLITFLF). Residues 1449–1576 (TCSQRKPQAD…KPRIVLPWWC (128 aa)) are Cytoplasmic-facing. The disordered stretch occupies residues 1494–1562 (PREVAKPASK…EQHPSQKDLQ (69 aa)). Over residues 1517–1527 (SKPKHRHRKAQ) the composition is skewed to basic residues. Positions 1549–1558 (DVHSEQHPSQ) are enriched in basic and acidic residues. A helical membrane pass occupies residues 1577–1597 (VYVAWFLVFATSSISSFFIVF). Topologically, residues 1598 to 1607 (YGLTYGYDKS) are extracellular. The chain crosses the membrane as a helical span at residues 1608–1628 (IEWLFASFCSFCQSVLLVQPS). At 1629–1708 (KIILLSGFRT…RKKRIKRRAL (80 aa)) the chain is on the cytoplasmic side. The helical transmembrane segment at 1709 to 1729 (LFLSYILTHFIFLALLLILIV) threads the bilayer. Residues 1730–1966 (LLRHTDCFYY…FDRKASAEIY (237 aa)) are Extracellular-facing. Residues N1836, N1893, and N1944 are each glycosylated (N-linked (GlcNAc...) asparagine). A helical membrane pass occupies residues 1967–1987 (LYVAILIFFLAYVVDEGCIIM). Residues 1988-1996 (QERASYVRS) are Cytoplasmic-facing. Residues 1997–2017 (VYNLLNFALKCIFTVLIVLFL) traverse the membrane as a helical segment. The Extracellular segment spans residues 2018-2042 (RKHFLATGIIRFYLSNPEDFIPFHA). A helical membrane pass occupies residues 2043–2063 (VSQVDHIMRIILGFLLFLTIL). Residues 2064–2091 (KTLRYSRFFYDVRLAQRAIQAALPGICH) lie on the Cytoplasmic side of the membrane. A helical membrane pass occupies residues 2092–2112 (MAFVVSVYFFVYMAFGYLVFG). Residues 2113-2145 (QHEWNYSNLIHSTQTVFSYCVSAFQNTEFSNNR) are Extracellular-facing. A helical membrane pass occupies residues 2146–2166 (ILGVLFLSSFMLVMICVLINL). Over 2167-2253 (FQAVILSAYE…NGKKMVYLVV (87 aa)) the chain is Cytoplasmic.

The protein belongs to the polycystin family. As to expression, exclusively expressed in testis.

The protein resides in the cell membrane. It is found in the cytoplasmic vesicle. Its subcellular location is the secretory vesicle. It localises to the acrosome membrane. The protein localises to the nucleus. Testis-specific protein that controls sperm transport and the timing of zona pellucida-evoked exocytosis of the sperm acrosome. This chain is Polycystin family receptor for egg jelly, found in Homo sapiens (Human).